Reading from the N-terminus, the 223-residue chain is RNA-free ribonuclease P (223 aa).

Belongs to the HARP family.

The catalysed reaction is Endonucleolytic cleavage of RNA, removing 5'-extranucleotides from tRNA precursor.. In terms of biological role, RNA-free RNase P that catalyzes the removal of the 5'-leader sequence from pre-tRNA to produce the mature 5'-terminus. The protein is RNA-free ribonuclease P of Methanococcus vannielii (strain ATCC 35089 / DSM 1224 / JCM 13029 / OCM 148 / SB).